The following is a 105-amino-acid chain: uncharacterized protein (105 aa).

Its subcellular location is the mitochondrion. This is an uncharacterized protein from Paramecium tetraurelia.